Reading from the N-terminus, the 364-residue chain is UDP-3-O-acylglucosamine N-acyltransferase (364 aa).

His258 functions as the Proton acceptor in the catalytic mechanism.

This sequence belongs to the transferase hexapeptide repeat family. LpxD subfamily. In terms of assembly, homotrimer.

The enzyme catalyses a UDP-3-O-[(3R)-3-hydroxyacyl]-alpha-D-glucosamine + a (3R)-hydroxyacyl-[ACP] = a UDP-2-N,3-O-bis[(3R)-3-hydroxyacyl]-alpha-D-glucosamine + holo-[ACP] + H(+). Its pathway is bacterial outer membrane biogenesis; LPS lipid A biosynthesis. Functionally, catalyzes the N-acylation of UDP-3-O-acylglucosamine using 3-hydroxyacyl-ACP as the acyl donor. Is involved in the biosynthesis of lipid A, a phosphorylated glycolipid that anchors the lipopolysaccharide to the outer membrane of the cell. The sequence is that of UDP-3-O-acylglucosamine N-acyltransferase from Burkholderia orbicola (strain MC0-3).